The sequence spans 463 residues: Ataxin-10 homolog (463 aa).

This sequence belongs to the ataxin-10 family.

The protein localises to the cytoplasm. Functionally, may play a role in the regulation of cytokinesis. This is Ataxin-10 homolog (CTR86) from Candida albicans (strain SC5314 / ATCC MYA-2876) (Yeast).